The sequence spans 252 residues: NAD-dependent protein deacetylase (252 aa).

The 248-residue stretch at 1–248 (MYLVEEAKKV…PEVISHIQSL (248 aa)) folds into the Deacetylase sirtuin-type domain. Residues A26, T30, F37, R38, Q102, V104, D105, and H120 each coordinate NAD(+). F37 provides a ligand contact to nicotinamide. Positions 104 and 105 each coordinate nicotinamide. H120 functions as the Proton acceptor in the catalytic mechanism. Zn(2+)-binding residues include C128, C131, C153, and C155. S191, S192, N216, and I234 together coordinate NAD(+).

The protein belongs to the sirtuin family. Class U subfamily. Zn(2+) is required as a cofactor.

Its subcellular location is the cytoplasm. The catalysed reaction is N(6)-acetyl-L-lysyl-[protein] + NAD(+) + H2O = 2''-O-acetyl-ADP-D-ribose + nicotinamide + L-lysyl-[protein]. NAD-dependent protein deacetylase which modulates the activities of several enzymes which are inactive in their acetylated form. Deacetylates the N-terminal lysine residue of Alba, the major archaeal chromatin protein and that, in turn, increases Alba's DNA binding affinity, thereby repressing transcription. This chain is NAD-dependent protein deacetylase, found in Sulfolobus acidocaldarius (strain ATCC 33909 / DSM 639 / JCM 8929 / NBRC 15157 / NCIMB 11770).